The sequence spans 2026 residues: MSNRPNSNPGGSLRRSQRNTAAAQPIDHTLAGRNSLSLSVGSLSIPDPDLEAAGTSGQQGRREGSSTRALKRSSVSEPNITFSPSPAKRPKVVSSHFSDSSASGPSAPAISPEVTEPRKAPASVSTKSKKRRLAAEPAPARALSKKSSSYPGPSGASSTPSQKRKKADATLLSSSSSSSLPSSSSAAGPLPPRSEASRAAKPTKLASKSAASAKAGCSTVTDSSSSSASSSSSSSSSSSAATGTNSCAPQGARLKQGKDQSKARRSRSASSPSPRRSSRDKEQSKAAGSSKFDWASRFNSKVNLPKPKLSLPGSAKAETSSKPGPSGLQAKLASLRKSTKKRSESPPAELPSCRRSTRQKTTGSCASTSRRGSGLGKRGAAEARRQEKMADSDNNQDGANSSAARTEETPQGASASSSVAGAVGMTTSGESESDDSEMGRLQALLEARGLPPHLFGPFGPRMSQLFHRTIGSGASSKAQQLLQGLQATGDESQQLQAAIEMCQLLVMGNEETLGGFPVKSVVPALITLLQMEHNFDIMNHASRALTYMMEALPRSSAVVVDAIPVFLEKLQVIQFIDVAEQALTALEMLSRRHSKAILQAGGLADCLLYLEFFSINAQRNALAIAANCCQSITPDEFHFVADSLPLLTQRLTHQDKKSVESTCLCFARLVDNFQHEENLLQQVASRDLLTNIQQLLVLTPPVLSSGMFIMVVRMFSLMCSNCPCLAVQLMKQNIAETLRFLLCGASNGSCQEQIDLVPRSPQELYELTSLICELMPCLPREGIFAVDAMLKKGSAQTTEGAIWQWRDDRGLWHPYNRIDSRIIEQINEDTGTARAIQRKPNPLANPNTGGHLEVRREDARAQLMKEDPELAKCFIKTLFGVLYEVYSSSAGPAVRHKCLRAILRIIYFADAELLKDVLRNHAVSSHIASMLSSQDLKIVVGSLQMAEILMQKLPDVFSVYFRREGVMHQVKNLAESEVFLTSPPKACTSGTASLCTTTITTATTTAASNVTPDLGSPSFQHSMDDSLDLSPQGRLSDVLKRKRLPKRGPRRPKYSPPRDDDKVDNQAKSPTTTQSPKSSFLASLNPKTWGKLGTQANSANSEPSRTAGVSGLARVPPKDSVSNNRDKIKAWIKEQASKFVERYFNSESVDGSNPALNVLQRLCTATEQLNLQMDSGVECLEEISSIVSESDVSSFEIQHSGLVKQLLLYLTSNSERDTISRDERIKRFLHVFFGCPIPGQEPPGRLDPTENGPLLALVHKMNNCLSQMEQFPVKVHDFPSGNGNGSRGSQALKFFNTHQLKCQLQRHPDCTNVKQWKGGPVKIDPLALVQAIERYLVVRGYGRIREEDEDSDDDGSDDEIDESLAAQFLNSGSVRHRLQFYIGEHLLPYNMTVYQAVRQFSLQAEEERESTDDEANPLGRAGIWTKTHTVWYKPVREDEEGCKDAVGGKRGRAQTAPTKTSPRNAKKQDELWHEGVCPSVANPLETYLICDPPEGITFDDPSMEVILLLRVLHSISRYWFYLYDNAACKEIIPTGEFINSKLTAKANRQLQDPLVIMTGNIPTWLTELGKTCPFFFPFDTRQMLFYVTAFDRDRAMQRLLDTNPEINQSDSQDSRVAPRLDRKKRTINRDELLKQAESVMQDLGSSRAMLEIQYENEVGTGLGPTQEFYALVSQELQRADLGLWRGEEVTLSNPKGSQEGTKYMFSSRGLFAVPFGRTTKPAHIAKIKMKFRFLGKLMAKAIMDFRLLDLPLGLPFYKWMLRHESSISSHDLVNIDPGVAKSIQHLEDIIRQKKRIEQDRSHTRETLQQALESLNMNGCSVEDLGLDFTLPGFPNIELKKGGKDVPVTIHNLEDYLRLVVYWTLNEGVLRQFESFREGFESVFPLHHLQYFYPEELDQLLCGSKSESWDVKTLMECCRPDHGYTHDSRAVRFLFEVLSSFDAEQQRLFLQFVTGSPRLPVGGFRSLNPPLTIVRKTFESTENPDDFLPSVMTCVNYLKLPDYSSIEIMREKLLIAAREGQQSFHLS.

Composition is skewed to polar residues over residues 1 to 10 (MSNRPNSNPG), 32 to 42 (GRNSLSLSVGS), and 73 to 84 (SSVSEPNITFSP). The disordered stretch occupies residues 1-437 (MSNRPNSNPG…SGESESDDSE (437 aa)). Composition is skewed to low complexity over residues 94–112 (SSHF…AISP), 135–161 (AEPA…STPS), 171–188 (LLSS…SAAG), and 199–241 (AAKP…SSAA). Polar residues predominate over residues 359 to 371 (QKTTGSCASTSRR). Over residues 379–391 (GAAEARRQEKMAD) the composition is skewed to basic and acidic residues. A compositionally biased stretch (polar residues) spans 392–404 (SDNNQDGANSSAA). Residues 412–430 (GASASSSVAGAVGMTTSGE) are compositionally biased toward low complexity. Residues 789–876 (MLKKGSAQTT…DPELAKCFIK (88 aa)) form the WWE domain. Disordered stretches follow at residues 1008–1123 (SNVT…SVSN) and 1441–1470 (GCKD…KQDE). The span at 1040-1053 (KRKRLPKRGPRRPK) shows a compositional bias: basic residues. Positions 1056 to 1065 (PPRDDDKVDN) are enriched in basic and acidic residues. Over residues 1068–1079 (KSPTTTQSPKSS) the composition is skewed to low complexity. Over residues 1094–1104 (TQANSANSEPS) the composition is skewed to polar residues. Positions 1530 to 1604 (EIIPTGEFIN…AMQRLLDTNP (75 aa)) are K-box. The HECT domain maps to 1919-2026 (PDHGYTHDSR…REGQQSFHLS (108 aa)). Cysteine 1993 serves as the catalytic Glycyl thioester intermediate.

It belongs to the UPL family. K-HECT subfamily.

The protein localises to the nucleus. It is found in the nucleoplasm. The enzyme catalyses S-ubiquitinyl-[E2 ubiquitin-conjugating enzyme]-L-cysteine + [acceptor protein]-L-lysine = [E2 ubiquitin-conjugating enzyme]-L-cysteine + N(6)-ubiquitinyl-[acceptor protein]-L-lysine.. It participates in protein modification; protein ubiquitination. E3 ubiquitin-protein ligase involved in ubiquitin fusion degradation (UFD) pathway and regulation of DNA repair. Part of the ubiquitin fusion degradation (UFD) pathway, a process that mediates ubiquitination of protein at their N-terminus, regardless of the presence of lysine residues in target proteins. Acts as a key regulator of DNA damage response by acting as a suppressor of RNF168, an E3 ubiquitin-protein ligase that promotes accumulation of 'Lys-63'-linked histone H2A and H2AX at DNA damage sites, thereby acting as a guard against excessive spreading of ubiquitinated chromatin at damaged chromosomes. This Danio rerio (Zebrafish) protein is E3 ubiquitin-protein ligase TRIP12 (trip12).